We begin with the raw amino-acid sequence, 445 residues long: Xylose isomerase (445 aa).

Catalysis depends on residues H99 and D102. Residues E230, E266, H269, D294, D305, D307, and D337 each contribute to the Mg(2+) site.

It belongs to the xylose isomerase family. In terms of assembly, homotetramer. Requires Mg(2+) as cofactor.

The protein resides in the cytoplasm. The enzyme catalyses alpha-D-xylose = alpha-D-xylulofuranose. The protein is Xylose isomerase of Geobacillus thermodenitrificans (strain NG80-2).